The primary structure comprises 301 residues: Glycine--tRNA ligase alpha subunit (301 aa).

The protein belongs to the class-II aminoacyl-tRNA synthetase family. In terms of assembly, tetramer of two alpha and two beta subunits.

Its subcellular location is the cytoplasm. It carries out the reaction tRNA(Gly) + glycine + ATP = glycyl-tRNA(Gly) + AMP + diphosphate. This is Glycine--tRNA ligase alpha subunit from Proteus mirabilis (strain HI4320).